Consider the following 632-residue polypeptide: 1-deoxy-D-xylulose-5-phosphate synthase (632 aa).

Thiamine diphosphate-binding positions include H73 and 114 to 116 (SHA). D146 contacts Mg(2+). Thiamine diphosphate contacts are provided by residues 147-148 (GA), N176, Y287, and E368. N176 contributes to the Mg(2+) binding site.

Belongs to the transketolase family. DXPS subfamily. Homodimer. Mg(2+) serves as cofactor. Requires thiamine diphosphate as cofactor.

It catalyses the reaction D-glyceraldehyde 3-phosphate + pyruvate + H(+) = 1-deoxy-D-xylulose 5-phosphate + CO2. Its pathway is metabolic intermediate biosynthesis; 1-deoxy-D-xylulose 5-phosphate biosynthesis; 1-deoxy-D-xylulose 5-phosphate from D-glyceraldehyde 3-phosphate and pyruvate: step 1/1. Its function is as follows. Catalyzes the acyloin condensation reaction between C atoms 2 and 3 of pyruvate and glyceraldehyde 3-phosphate to yield 1-deoxy-D-xylulose-5-phosphate (DXP). The protein is 1-deoxy-D-xylulose-5-phosphate synthase of Corynebacterium glutamicum (strain R).